Consider the following 163-residue polypeptide: MELTHFDEEGRARMVDVSAKAETTRVATARGKVEMQAETLERIRSGQIAKGDVLAVAQVAGIMAAKQTSNVIPMCHPLAITGAKLNFEIVPPGTIEIEGIVKVTGKTGVEMEALTAVSVAALTIYDMCKAIDKTMVISDIRLMEKTGGKSGHFIREDHLKSTT.

Substrate is bound by residues 74–76 (MCH) and 111–112 (ME). Asp-126 is an active-site residue.

It belongs to the MoaC family. As to quaternary structure, homohexamer; trimer of dimers.

It catalyses the reaction (8S)-3',8-cyclo-7,8-dihydroguanosine 5'-triphosphate = cyclic pyranopterin phosphate + diphosphate. Its pathway is cofactor biosynthesis; molybdopterin biosynthesis. Catalyzes the conversion of (8S)-3',8-cyclo-7,8-dihydroguanosine 5'-triphosphate to cyclic pyranopterin monophosphate (cPMP). The chain is Cyclic pyranopterin monophosphate synthase from Desulfitobacterium hafniense (strain DSM 10664 / DCB-2).